A 45-amino-acid chain; its full sequence is Photosystem II reaction center protein K (45 aa).

The propeptide occupies 1-8 (MELAMLLA). Residues 24-44 (LPVIPVFFLLLAFVWQAAVGF) traverse the membrane as a helical segment.

Belongs to the PsbK family. As to quaternary structure, PSII is composed of 1 copy each of membrane proteins PsbA, PsbB, PsbC, PsbD, PsbE, PsbF, PsbH, PsbI, PsbJ, PsbK, PsbL, PsbM, PsbT, PsbX, PsbY, PsbZ, Psb30/Ycf12, peripheral proteins PsbO, CyanoQ (PsbQ), PsbU, PsbV and a large number of cofactors. It forms dimeric complexes.

The protein resides in the cellular thylakoid membrane. In terms of biological role, one of the components of the core complex of photosystem II (PSII). PSII is a light-driven water:plastoquinone oxidoreductase that uses light energy to abstract electrons from H(2)O, generating O(2) and a proton gradient subsequently used for ATP formation. It consists of a core antenna complex that captures photons, and an electron transfer chain that converts photonic excitation into a charge separation. This is Photosystem II reaction center protein K from Trichodesmium erythraeum (strain IMS101).